Here is a 487-residue protein sequence, read N- to C-terminus: Ribosome biogenesis protein YTM1 (487 aa).

A ubiquitin-like (UBL) domain region spans residues 13 to 95 (VKVTFTTNEA…ETNLTLQYVR (83 aa)). WD repeat units lie at residues 122–161 (SPAG…LVTA), 168–206 (GHSA…ASGQ), 217–256 (GHRA…SPEA), 379–419 (GHTN…PASG), and 451–487 (GEGA…VVRE). A disordered region spans residues 253–277 (SPEADASLLPNAHTSKRRKVASSVT).

The protein belongs to the WD repeat WDR12/YTM1 family. In terms of assembly, component of the NOP7 complex, composed of ERB1, NOP7 and YTM1. The complex is held together by ERB1, which interacts with NOP7 via its N-terminal domain and with YTM1 via a high-affinity interaction between the seven-bladed beta-propeller domains of the 2 proteins. The NOP7 complex associates with the 66S pre-ribosome. Interacts (via UBL domain) with MDN1 (via VWFA/MIDAS domain).

The protein resides in the nucleus. Its subcellular location is the nucleolus. It is found in the nucleoplasm. In terms of biological role, component of the NOP7 complex, which is required for maturation of the 25S and 5.8S ribosomal RNAs and formation of the 60S ribosome. This is Ribosome biogenesis protein YTM1 from Podospora anserina (strain S / ATCC MYA-4624 / DSM 980 / FGSC 10383) (Pleurage anserina).